A 370-amino-acid polypeptide reads, in one-letter code: ATP synthase gamma chain, chloroplastic (370 aa).

A chloroplast-targeting transit peptide spans 1–54 (MRSFCIAALLAVASAFTTQPTSFTVKTANVGERASGVFPEQSSAHRTRKATIVM). The active site involves Cys145.

This sequence belongs to the ATPase gamma chain family. In terms of assembly, F-type ATPases have 2 components, CF(1) - the catalytic core - and CF(0) - the membrane proton channel. CF(1) has five subunits: alpha(3), beta(3), gamma(1), delta(1), epsilon(1). CF(0) has four main subunits: a, b, b' and c.

The protein localises to the plastid. Its subcellular location is the chloroplast thylakoid membrane. Functionally, produces ATP from ADP in the presence of a proton gradient across the membrane. The gamma chain is believed to be important in regulating ATPase activity and the flow of protons through the CF(0) complex. The polypeptide is ATP synthase gamma chain, chloroplastic (ATPC) (Phaeodactylum tricornutum (Diatom)).